The primary structure comprises 418 residues: AP-3 complex subunit mu-1 (418 aa).

The MHD domain maps to 176–417 (NNEAYFDVVE…VTKAGKFQVR (242 aa)).

The protein belongs to the adaptor complexes medium subunit family. As to quaternary structure, adaptor protein complex 3 (AP-3) is a heterotetramer composed of two large adaptins (delta-type subunit AP3D1 and beta-type subunit AP3B1 or AP3B2), a medium adaptin (mu-type subunit AP3M1 or AP3M2) and a small adaptin (sigma-type subunit APS1 or AP3S2). Interacts with AGAP1. AP-3 associates with the BLOC-1 complex.

The protein resides in the golgi apparatus. The protein localises to the cytoplasmic vesicle membrane. Functionally, part of the AP-3 complex, an adaptor-related complex which is not clathrin-associated. The complex is associated with the Golgi region as well as more peripheral structures. It facilitates the budding of vesicles from the Golgi membrane and may be directly involved in trafficking to lysosomes. In concert with the BLOC-1 complex, AP-3 is required to target cargos into vesicles assembled at cell bodies for delivery into neurites and nerve terminals. In Mus musculus (Mouse), this protein is AP-3 complex subunit mu-1 (Ap3m1).